Consider the following 1057-residue polypeptide: Carbamoyl phosphate synthase large chain (1057 aa).

The carboxyphosphate synthetic domain stretch occupies residues Met1–Glu401. Residues Arg129, Arg169, Gly175, Gly176, Lys208, Ile210, Glu215, Gly241, Ile242, His243, Gln284, and Glu298 each coordinate ATP. Residues Arg133 to Val327 enclose the ATP-grasp 1 domain. Residues Gln284, Glu298, and Asn300 each coordinate Mg(2+). Residues Gln284, Glu298, and Asn300 each contribute to the Mn(2+) site. The tract at residues Tyr402–Ser546 is oligomerization domain. The tract at residues Ile547 to Gly929 is carbamoyl phosphate synthetic domain. The ATP-grasp 2 domain occupies Glu671–Met861. ATP-binding residues include Arg707, Arg746, Leu748, Glu752, Gly777, Val778, His779, Ser780, Gln820, and Glu832. Residues Gln820, Glu832, and Asn834 each contribute to the Mg(2+) site. Residues Gln820, Glu832, and Asn834 each contribute to the Mn(2+) site. The 128-residue stretch at Phe930–Val1057 folds into the MGS-like domain. The allosteric domain stretch occupies residues Phe930–Val1057.

The protein belongs to the CarB family. Composed of two chains; the small (or glutamine) chain promotes the hydrolysis of glutamine to ammonia, which is used by the large (or ammonia) chain to synthesize carbamoyl phosphate. Tetramer of heterodimers (alpha,beta)4. Requires Mg(2+) as cofactor. It depends on Mn(2+) as a cofactor.

The enzyme catalyses hydrogencarbonate + L-glutamine + 2 ATP + H2O = carbamoyl phosphate + L-glutamate + 2 ADP + phosphate + 2 H(+). The catalysed reaction is hydrogencarbonate + NH4(+) + 2 ATP = carbamoyl phosphate + 2 ADP + phosphate + 2 H(+). Its pathway is amino-acid biosynthesis; L-arginine biosynthesis; carbamoyl phosphate from bicarbonate: step 1/1. The protein operates within pyrimidine metabolism; UMP biosynthesis via de novo pathway; (S)-dihydroorotate from bicarbonate: step 1/3. Its function is as follows. Large subunit of the glutamine-dependent carbamoyl phosphate synthetase (CPSase). CPSase catalyzes the formation of carbamoyl phosphate from the ammonia moiety of glutamine, carbonate, and phosphate donated by ATP, constituting the first step of 2 biosynthetic pathways, one leading to arginine and/or urea and the other to pyrimidine nucleotides. The large subunit (synthetase) binds the substrates ammonia (free or transferred from glutamine from the small subunit), hydrogencarbonate and ATP and carries out an ATP-coupled ligase reaction, activating hydrogencarbonate by forming carboxy phosphate which reacts with ammonia to form carbamoyl phosphate. The polypeptide is Carbamoyl phosphate synthase large chain (Staphylococcus epidermidis (strain ATCC 12228 / FDA PCI 1200)).